An 847-amino-acid polypeptide reads, in one-letter code: Alanine--tRNA ligase (847 aa).

Positions 554, 558, 656, and 660 each coordinate Zn(2+).

The protein belongs to the class-II aminoacyl-tRNA synthetase family. The cofactor is Zn(2+).

The protein resides in the cytoplasm. It catalyses the reaction tRNA(Ala) + L-alanine + ATP = L-alanyl-tRNA(Ala) + AMP + diphosphate. Functionally, catalyzes the attachment of alanine to tRNA(Ala) in a two-step reaction: alanine is first activated by ATP to form Ala-AMP and then transferred to the acceptor end of tRNA(Ala). Also edits incorrectly charged Ser-tRNA(Ala) and Gly-tRNA(Ala) via its editing domain. The sequence is that of Alanine--tRNA ligase from Helicobacter pylori (strain Shi470).